Consider the following 497-residue polypeptide: Cytochrome P450 CYP94D108 (497 aa).

The helical transmembrane segment at leucine 6–proline 26 threads the bilayer. Residue cysteine 439 coordinates heme.

It belongs to the cytochrome P450 family. As to expression, mainly expressed in roots and, at low levels, in leaves, fruits and stems.

The protein localises to the membrane. It functions in the pathway steroid metabolism; cholesterol metabolism. Involved in the biosynthesis of spiroketal steroid and saponin natural products from cholesterol such as diosgenin and analogs (e.g. furostanol and spirostanol), plant defense compounds used as main precursors for the industrial production of steroid hormones. During the 5,6-spiroketalization of cholesterol, may catalyze the 27-monohydroxylation of furostanol-type steroid to an intermediate product that undergoes a stereospecific formation of the terminal heterocycle to yield diosgenin. The polypeptide is Cytochrome P450 CYP94D108 (Paris polyphylla (Daiswa polyphylla)).